Consider the following 644-residue polypeptide: Phosphomethylpyrimidine synthase (644 aa).

Substrate-binding positions include Asn236, Met265, Tyr294, His330, 350–352 (SRG), 391–394 (DGLR), and Glu430. Residue His434 participates in Zn(2+) binding. Position 457 (Tyr457) interacts with substrate. Zn(2+) is bound at residue His498. [4Fe-4S] cluster contacts are provided by Cys578, Cys581, and Cys586.

The protein belongs to the ThiC family. In terms of assembly, homodimer. Requires [4Fe-4S] cluster as cofactor.

It catalyses the reaction 5-amino-1-(5-phospho-beta-D-ribosyl)imidazole + S-adenosyl-L-methionine = 4-amino-2-methyl-5-(phosphooxymethyl)pyrimidine + CO + 5'-deoxyadenosine + formate + L-methionine + 3 H(+). It functions in the pathway cofactor biosynthesis; thiamine diphosphate biosynthesis. Catalyzes the synthesis of the hydroxymethylpyrimidine phosphate (HMP-P) moiety of thiamine from aminoimidazole ribotide (AIR) in a radical S-adenosyl-L-methionine (SAM)-dependent reaction. This chain is Phosphomethylpyrimidine synthase, found in Aliivibrio fischeri (strain ATCC 700601 / ES114) (Vibrio fischeri).